Reading from the N-terminus, the 95-residue chain is MQGVLVGLGAGLGAISRYQLSMLIDAPLALLGINLLGSFLMGWLRPNLLWGTGFLGGFTSFSAFALLMFDGAYLYAAVTVIGCVAAWLLGDRFAA.

A run of 3 helical transmembrane segments spans residues 23-43 (LIDA…LMGW), 49-69 (LWGT…LLMF), and 70-90 (DGAY…WLLG). The Na(+) site is built by Gly-56 and Thr-59.

Belongs to the fluoride channel Fluc/FEX (TC 1.A.43) family.

The protein localises to the cell membrane. The enzyme catalyses fluoride(in) = fluoride(out). Na(+) is not transported, but it plays an essential structural role and its presence is essential for fluoride channel function. Functionally, fluoride-specific ion channel. Important for reducing fluoride concentration in the cell, thus reducing its toxicity. This is Fluoride-specific ion channel FluC 1 from Corynebacterium diphtheriae (strain ATCC 700971 / NCTC 13129 / Biotype gravis).